Here is a 160-residue protein sequence, read N- to C-terminus: S-ribosylhomocysteine lyase (160 aa).

3 residues coordinate Fe cation: His57, His61, and Cys127.

Belongs to the LuxS family. In terms of assembly, homodimer. Fe cation serves as cofactor.

The catalysed reaction is S-(5-deoxy-D-ribos-5-yl)-L-homocysteine = (S)-4,5-dihydroxypentane-2,3-dione + L-homocysteine. In terms of biological role, involved in the synthesis of autoinducer 2 (AI-2) which is secreted by bacteria and is used to communicate both the cell density and the metabolic potential of the environment. The regulation of gene expression in response to changes in cell density is called quorum sensing. Catalyzes the transformation of S-ribosylhomocysteine (RHC) to homocysteine (HC) and 4,5-dihydroxy-2,3-pentadione (DPD). The protein is S-ribosylhomocysteine lyase of Streptococcus thermophilus (strain CNRZ 1066).